The sequence spans 763 residues: Endothelin-converting enzyme 2 (763 aa).

Residues 1–60 (MNVALHELGGGGSMVEYKRAKLRDEESPEITVEGRATRDSLEVGFQKRTRQLFGSHTQLE) lie on the Cytoplasmic side of the membrane. Ser27 carries the post-translational modification Phosphoserine. The chain crosses the membrane as a helical; Signal-anchor for type II membrane protein span at residues 61–81 (LVLAGLILVLAALLLGCLVAL). At 82–763 (WVHRDPAHST…MNPGQLCEVW (682 aa)) the chain is on the lumenal side. A Peptidase M13 domain is found at 91-763 (TCVTEACIRV…MNPGQLCEVW (673 aa)). Cystine bridges form between Cys92–Cys97, Cys115–Cys748, Cys123–Cys708, Cys179–Cys428, and Cys637–Cys760. Asn159, Asn163, Asn204, Asn264, Asn309, Asn376, and Asn532 each carry an N-linked (GlcNAc...) asparagine glycan. His600 provides a ligand contact to Zn(2+). The active site involves Glu601. Residue His604 coordinates Zn(2+). N-linked (GlcNAc...) asparagine glycans are attached at residues Asn625 and Asn633. Glu660 is a Zn(2+) binding site. The active-site Proton donor is the Asp664.

The protein belongs to the peptidase M13 family. The cofactor is Zn(2+).

The protein localises to the golgi apparatus membrane. Its subcellular location is the cytoplasmic vesicle. The protein resides in the secretory vesicle membrane. It carries out the reaction Hydrolysis of the 21-Trp-|-Val-22 bond in big endothelin to form endothelin 1.. In terms of biological role, converts big endothelin-1 to endothelin-1. Also involved in the processing of various neuroendocrine peptides, including neurotensin, angiotensin I, substance P, proenkephalin-derived peptides, and prodynorphin-derived peptides. May play a role in amyloid-beta processing. The polypeptide is Endothelin-converting enzyme 2 (Mus musculus (Mouse)).